The primary structure comprises 346 residues: DNA primase small subunit PriS (346 aa).

Active-site residues include Asp97, Asp99, and Asp278.

Belongs to the eukaryotic-type primase small subunit family. As to quaternary structure, heterodimer of a small subunit (PriS) and a large subunit (PriL). Mg(2+) serves as cofactor. Requires Mn(2+) as cofactor.

Functionally, catalytic subunit of DNA primase, an RNA polymerase that catalyzes the synthesis of short RNA molecules used as primers for DNA polymerase during DNA replication. The small subunit contains the primase catalytic core and has DNA synthesis activity on its own. Binding to the large subunit stabilizes and modulates the activity, increasing the rate of DNA synthesis while decreasing the length of the DNA fragments, and conferring RNA synthesis capability. The DNA polymerase activity may enable DNA primase to also catalyze primer extension after primer synthesis. May also play a role in DNA repair. The polypeptide is DNA primase small subunit PriS (Thermococcus onnurineus (strain NA1)).